The primary structure comprises 425 residues: Adenylosuccinate synthetase (425 aa).

GTP-binding positions include 12–18 (GDEGKGK) and 40–42 (GHT). Asp13 functions as the Proton acceptor in the catalytic mechanism. Asp13 and Gly40 together coordinate Mg(2+). Residues 13-16 (DEGK), 38-41 (NAGH), Thr129, Arg143, Asn221, Thr236, and Arg300 each bind IMP. His41 (proton donor) is an active-site residue. 296 to 302 (VTTGRKR) contacts substrate. GTP contacts are provided by residues Arg302, 328 to 330 (KLD), and 410 to 412 (GVG).

Belongs to the adenylosuccinate synthetase family. In terms of assembly, homodimer. Mg(2+) serves as cofactor.

It localises to the cytoplasm. It catalyses the reaction IMP + L-aspartate + GTP = N(6)-(1,2-dicarboxyethyl)-AMP + GDP + phosphate + 2 H(+). It participates in purine metabolism; AMP biosynthesis via de novo pathway; AMP from IMP: step 1/2. Plays an important role in the de novo pathway and in the salvage pathway of purine nucleotide biosynthesis. Catalyzes the first committed step in the biosynthesis of AMP from IMP. The sequence is that of Adenylosuccinate synthetase from Phaeosphaeria nodorum (strain SN15 / ATCC MYA-4574 / FGSC 10173) (Glume blotch fungus).